Reading from the N-terminus, the 392-residue chain is Nucleolysin TIAR (392 aa).

RRM domains lie at R9 to T102 and F114 to R192. Residue K139 is modified to N6-acetyllysine. S218 is subject to Phosphoserine. Residues C222–E294 form the RRM 3 domain. A disordered region spans residues G363 to Q392. Positions G369–N380 are enriched in pro residues.

In terms of assembly, interacts with FASTK. Post-translationally, phosphorylated by MAPK14 following DNA damage, releasing TIAR from GADD45A mRNA. As to expression, expressed both in primordial germ cells (PGCs) and in neighboring somatic cells.

It is found in the nucleus. It localises to the cytoplasm. The protein resides in the stress granule. Its subcellular location is the cytolytic granule. Functionally, RNA-binding protein involved in alternative pre-RNA splicing and in cytoplasmic stress granules formation. Shows a preference for uridine-rich RNAs. Activates splicing of alternative exons with weak 5' splice sites followed by a U-rich stretch on its own pre-mRNA and on TIA1 mRNA. Promotes the inclusion of TIA1 exon 5 to give rise to the long isoform (isoform a) of TIA1. Acts downstream of the stress-induced phosphorylation of EIF2S1/EIF2A to promote the recruitment of untranslated mRNAs to cytoplasmic stress granules (SG). Possesses nucleolytic activity against cytotoxic lymphocyte target cells. May be involved in apoptosis. This is Nucleolysin TIAR (Tial1) from Mus musculus (Mouse).